A 561-amino-acid polypeptide reads, in one-letter code: Acyl-CoA ligase ppsA (561 aa).

An N-linked (GlcNAc...) asparagine glycan is attached at asparagine 21. A helical membrane pass occupies residues 71-91 (SILYPALFLAIVGVGAVYMGA). 203 to 214 (MFATSGTSGLPK) contacts AMP. Asparagine 396 carries an N-linked (GlcNAc...) asparagine glycan. An AMP-binding region spans residues 462-540 (ELEAELAQHP…DSIPRNSGGK (79 aa)).

This sequence belongs to the ATP-dependent AMP-binding enzyme family.

Its subcellular location is the membrane. It catalyses the reaction acetate + ATP + CoA = acetyl-CoA + ADP + phosphate. It carries out the reaction propanoate + ATP + CoA = propanoyl-CoA + AMP + diphosphate. Its pathway is secondary metabolite biosynthesis. Acyl-CoA ligase; part of the gene cluster that mediates the biosynthesis of 2,4'-dihydroxy-3'-methoxypropiophenone. The first step of the pathway is the conversion of acetate into acetyl-CoA by the acyl-CoA ligase ppsA. Acetyl-CoA is then used as a starter unit by the polyketide synthase ppsB and condensed with 4 malonyl-CoA unit to produce the pentaketide backbone. During polyketide extension, the polykedite chain is probably reduced and dehydrated by the KR and PT domains, respectively. O-methylation seems to be catalyzed by an unknown methyltransferase rather than by the CMeT domain of ppsB. Two hydroxylations and one further decarboxylation step catalyzed by yet unknown enzymes are then required to yield 4'-hydroxy-3'-methoxypropiophenone. PpsC functions as a carrier protein to transport 4'-hydroxy-3'-methoxypropiophenone to a specific cell compartment in which 4'-hydroxy-3'-methoxypropiophenone is hydroxylated to 2,4'-dihydroxy-3'-methoxypropiophenone by a still to be identified enzyme. This Aspergillus oryzae (strain ATCC 42149 / RIB 40) (Yellow koji mold) protein is Acyl-CoA ligase ppsA.